Reading from the N-terminus, the 467-residue chain is tRNA-2-methylthio-N(6)-dimethylallyladenosine synthase (467 aa).

The 121-residue stretch at 15–135 (KKIFVKTYGC…LPEYVARLAN (121 aa)) folds into the MTTase N-terminal domain. Residues Cys-24, Cys-60, Cys-98, Cys-177, Cys-181, and Cys-184 each coordinate [4Fe-4S] cluster. Positions 163–395 (LARGATAFLT…QALLGEQQLA (233 aa)) constitute a Radical SAM core domain. A TRAM domain is found at 398–461 (AGCAGRTMPV…RNSLRGRLRE (64 aa)).

It belongs to the methylthiotransferase family. MiaB subfamily. In terms of assembly, monomer. Requires [4Fe-4S] cluster as cofactor.

It is found in the cytoplasm. The catalysed reaction is N(6)-dimethylallyladenosine(37) in tRNA + (sulfur carrier)-SH + AH2 + 2 S-adenosyl-L-methionine = 2-methylsulfanyl-N(6)-dimethylallyladenosine(37) in tRNA + (sulfur carrier)-H + 5'-deoxyadenosine + L-methionine + A + S-adenosyl-L-homocysteine + 2 H(+). Functionally, catalyzes the methylthiolation of N6-(dimethylallyl)adenosine (i(6)A), leading to the formation of 2-methylthio-N6-(dimethylallyl)adenosine (ms(2)i(6)A) at position 37 in tRNAs that read codons beginning with uridine. The chain is tRNA-2-methylthio-N(6)-dimethylallyladenosine synthase from Parvibaculum lavamentivorans (strain DS-1 / DSM 13023 / NCIMB 13966).